The primary structure comprises 90 residues: Bombyxin B-12 (90 aa).

Residues 1 to 20 form the signal peptide; that stretch reads MMKTTIMFMLVVVISLTYSS. Cystine bridges form between cysteine 30-cysteine 76, cysteine 42-cysteine 89, and cysteine 75-cysteine 80. The propeptide at 49 to 67 is c peptide like; it reads SGAQYAPYFWTRQYLGSRG.

The protein belongs to the insulin family. As to quaternary structure, heterodimer of a B chain and an A chain linked by two disulfide bonds.

The protein localises to the secreted. Its function is as follows. Brain peptide responsible for activation of prothoracic glands to produce ecdysone in insects. The protein is Bombyxin B-12 (BBXB12) of Bombyx mori (Silk moth).